A 119-amino-acid polypeptide reads, in one-letter code: Large ribosomal subunit protein uL24 (119 aa).

It belongs to the universal ribosomal protein uL24 family. In terms of assembly, part of the 50S ribosomal subunit.

Functionally, one of two assembly initiator proteins, it binds directly to the 5'-end of the 23S rRNA, where it nucleates assembly of the 50S subunit. Its function is as follows. One of the proteins that surrounds the polypeptide exit tunnel on the outside of the subunit. This chain is Large ribosomal subunit protein uL24, found in Sulfurihydrogenibium sp. (strain YO3AOP1).